The chain runs to 442 residues: MKFFIEKNKKNTDRVTINIPKKIVSNELIREFIEINKKTKINGFRKGKTPIKIIQEKYGNRVYYDVFNQLMQKFFYEFIKKEKIKIIGLPKYVMHENEDQKEYFKYSVNYEVYPKFEIKDVNLIKVEKIIVNIKDEDVKKNIEKTASYEKDIWNKVNRAIKTNDLVTINYCIYENNKKLDKFNVEKFKFIVSQNNFIPELNNKLINHFTNDVIFFKINFCKFHPEEELQGKDITFKIKILNVEEKQENIEIEKNIKTIKINKLSKLNYQTIKNNIIEKIKSLTQNHLQNQIIKQLIIKNPINIPPTLLREETNFLRNKFIKEYKEKQENILKKKYHTNLESKAKTRLHIKLIIEKIIRDNKISVNEEKVDLLIKKISLKYKKPLEIINIYKKNTMLRKTIKNIELEMQVMQFLIKKVKIIEKNWTLDEIMNYNWKNNEELFA.

The PPIase FKBP-type domain occupies 163–248; the sequence is NDLVTINYCI…ILNVEEKQEN (86 aa).

It belongs to the FKBP-type PPIase family. Tig subfamily.

Its subcellular location is the cytoplasm. It carries out the reaction [protein]-peptidylproline (omega=180) = [protein]-peptidylproline (omega=0). Involved in protein export. Acts as a chaperone by maintaining the newly synthesized protein in an open conformation. Functions as a peptidyl-prolyl cis-trans isomerase. The protein is Trigger factor of Buchnera aphidicola subsp. Schizaphis graminum (strain Sg).